The chain runs to 726 residues: Disintegrin and metalloproteinase domain-containing protein 20 (726 aa).

A signal peptide spans Met-1–Ala-31. Residues Arg-32–Gln-206 constitute a propeptide that is removed on maturation. Residues Met-171–Glu-178 carry the Cysteine switch motif. Cys-173 is a Zn(2+) binding site. N-linked (GlcNAc...) asparagine glycosylation is found at Asn-191 and Asn-226. Residues Arg-207–Tyr-400 enclose the Peptidase M12B domain. At Arg-207–Tyr-693 the chain is on the extracellular side. 3 disulfides stabilise this stretch: Cys-317-Cys-394, Cys-357-Cys-379, and Cys-359-Cys-364. His-342 is a Zn(2+) binding site. Glu-343 is a catalytic residue. 2 residues coordinate Zn(2+): His-346 and His-352. Residues Asn-378, Asn-438, Asn-479, and Asn-587 are each glycosylated (N-linked (GlcNAc...) asparagine). A Disintegrin domain is found at Leu-407–Asp-493. Cysteines 465 and 485 form a disulfide. Disulfide bonds link Cys-635–Cys-646, Cys-640–Cys-652, and Cys-654–Cys-663. Residues Cys-635 to Cys-663 form the EGF-like domain. The chain crosses the membrane as a helical span at residues Leu-694–Phe-714. Topologically, residues Lys-715–Gly-726 are cytoplasmic.

Requires Zn(2+) as cofactor. Post-translationally, has no obvious cleavage site for furin endopeptidase, suggesting that the proteolytic processing is regulated. Testis specific.

The protein resides in the membrane. Functionally, may be involved in sperm maturation and/or fertilization. The protein is Disintegrin and metalloproteinase domain-containing protein 20 (ADAM20) of Homo sapiens (Human).